Consider the following 325-residue polypeptide: 4-hydroxy-3-methylbut-2-enyl diphosphate reductase (325 aa).

Cys-25 contributes to the [4Fe-4S] cluster binding site. (2E)-4-hydroxy-3-methylbut-2-enyl diphosphate is bound by residues His-54 and His-87. Residues His-54 and His-87 each coordinate dimethylallyl diphosphate. Residues His-54 and His-87 each coordinate isopentenyl diphosphate. Residue Cys-109 participates in [4Fe-4S] cluster binding. Position 137 (His-137) interacts with (2E)-4-hydroxy-3-methylbut-2-enyl diphosphate. A dimethylallyl diphosphate-binding site is contributed by His-137. His-137 is a binding site for isopentenyl diphosphate. The Proton donor role is filled by Glu-139. Thr-179 is a (2E)-4-hydroxy-3-methylbut-2-enyl diphosphate binding site. A [4Fe-4S] cluster-binding site is contributed by Cys-209. Residues Ser-237, Ser-238, Asn-239, and Ser-282 each contribute to the (2E)-4-hydroxy-3-methylbut-2-enyl diphosphate site. 4 residues coordinate dimethylallyl diphosphate: Ser-237, Ser-238, Asn-239, and Ser-282. 4 residues coordinate isopentenyl diphosphate: Ser-237, Ser-238, Asn-239, and Ser-282.

It belongs to the IspH family. It depends on [4Fe-4S] cluster as a cofactor.

It carries out the reaction isopentenyl diphosphate + 2 oxidized [2Fe-2S]-[ferredoxin] + H2O = (2E)-4-hydroxy-3-methylbut-2-enyl diphosphate + 2 reduced [2Fe-2S]-[ferredoxin] + 2 H(+). The catalysed reaction is dimethylallyl diphosphate + 2 oxidized [2Fe-2S]-[ferredoxin] + H2O = (2E)-4-hydroxy-3-methylbut-2-enyl diphosphate + 2 reduced [2Fe-2S]-[ferredoxin] + 2 H(+). It functions in the pathway isoprenoid biosynthesis; dimethylallyl diphosphate biosynthesis; dimethylallyl diphosphate from (2E)-4-hydroxy-3-methylbutenyl diphosphate: step 1/1. Its pathway is isoprenoid biosynthesis; isopentenyl diphosphate biosynthesis via DXP pathway; isopentenyl diphosphate from 1-deoxy-D-xylulose 5-phosphate: step 6/6. Its function is as follows. Catalyzes the conversion of 1-hydroxy-2-methyl-2-(E)-butenyl 4-diphosphate (HMBPP) into a mixture of isopentenyl diphosphate (IPP) and dimethylallyl diphosphate (DMAPP). Acts in the terminal step of the DOXP/MEP pathway for isoprenoid precursor biosynthesis. In Corynebacterium glutamicum (strain ATCC 13032 / DSM 20300 / JCM 1318 / BCRC 11384 / CCUG 27702 / LMG 3730 / NBRC 12168 / NCIMB 10025 / NRRL B-2784 / 534), this protein is 4-hydroxy-3-methylbut-2-enyl diphosphate reductase.